A 428-amino-acid chain; its full sequence is Nematode resistance protein-like HSPRO1 (428 aa).

As to quaternary structure, interacts with SNF4.

The protein localises to the cytoplasm. Its function is as follows. Positive regulator of basal resistance. This is Nematode resistance protein-like HSPRO1 (HSPRO1) from Arabidopsis thaliana (Mouse-ear cress).